The primary structure comprises 70 residues: Consomatin Mrc3 (70 aa).

The first 22 residues, 1 to 22 (MQTAYWVMVMMMVWITAPLSEG), serve as a signal peptide directing secretion. The propeptide occupies 23–55 (GKLNDVIRGLVPDDVTPKRILQSLISRRRFDGR). Cys62 and Cys67 are joined by a disulfide. Trp64 bears the D-tryptophan mark. At Pro68 the chain carries 4-hydroxyproline. Position 69 is a tyrosine amide (Tyr69).

This sequence belongs to the conotoxin C superfamily. Consomatin family. In terms of tissue distribution, expressed by the venom duct.

The protein localises to the secreted. In terms of biological role, moderately activates human somatostatin receptors (SSTR) with a preferential activation of SSTR1 and SSTR4. In vivo, does not cause behavioral changes in mice within a few minutes of intracranial injection, but causes a progressive loss of movement thereafter. Four to five hours after injection, mice recover, even with the highest dose tested. Shows antinociception and antihyperalgesia activities in two mouse models of acute pain, most probably by acting outside the central nervous system. This Conus mercator (Trader cone) protein is Consomatin Mrc3.